The primary structure comprises 89 residues: Small ribosomal subunit protein uS15 (89 aa).

It belongs to the universal ribosomal protein uS15 family. In terms of assembly, part of the 30S ribosomal subunit. Forms a bridge to the 50S subunit in the 70S ribosome, contacting the 23S rRNA.

Functionally, one of the primary rRNA binding proteins, it binds directly to 16S rRNA where it helps nucleate assembly of the platform of the 30S subunit by binding and bridging several RNA helices of the 16S rRNA. Forms an intersubunit bridge (bridge B4) with the 23S rRNA of the 50S subunit in the ribosome. The protein is Small ribosomal subunit protein uS15 of Ralstonia nicotianae (strain ATCC BAA-1114 / GMI1000) (Ralstonia solanacearum).